Consider the following 768-residue polypeptide: Solute carrier family 45 member 4 (768 aa).

Residues 1–32 (MKMAPQNADPESMQVQELSVPLPDPQKAGGAE) form a disordered region. 6 helical membrane-spanning segments follow: residues 63–83 (EFCYAMETALVTPILLQIGLP), 86–106 (YYSLTWFLSPILGLIFTPLIG), 123–143 (ILALCVGVLFGVALFLNGSAI), 155–175 (PIGIVLTVLGVVVLDFSADAT), 196–216 (LNIHAFSAGLGGAIGYVLGGL), and 233–253 (VLFFFAAIIFTVSVALHLFSI). 2 disordered regions span residues 259-284 (SPQQERSAEEPGALDGGEPHGVPAFP) and 379-419 (NEAK…RHAF). Phosphoserine is present on residues Ser-424 and Ser-454. The segment at 460 to 489 (DMQKRQRQHRHRNQSGATTSSGDTESEEGE) is disordered. Low complexity predominate over residues 473–482 (QSGATTSSGD). At Ser-485 the chain carries Phosphoserine. 6 helical membrane-spanning segments follow: residues 518–538 (TWFSVIAEAVFYTDFMGQVIF), 560–580 (MGCWGLVIYAATGAICSALLQ), 592–612 (VIYVLGTLGFSVGTAVMAMFP), 614–634 (VYVAMVTISTMGIVSMSISYC), 666–686 (ILSCQVYISQILVASALGGVV), and 695–715 (IPMVASVGSFLGFLTATFLVI). Residues 726 to 768 (EQKGLSSPLAGEGRAGGNSEKPTVLKLTRKEGLQGPVETESVV) are disordered. Ser-732 bears the Phosphoserine mark.

Belongs to the glycoside-pentoside-hexuronide (GPH) cation symporter transporter (TC 2.A.2) family.

It is found in the membrane. The catalysed reaction is sucrose(out) + H(+)(out) = sucrose(in) + H(+)(in). Functionally, proton-associated sucrose transporter. May be able to transport also glucose and fructose. The chain is Solute carrier family 45 member 4 from Homo sapiens (Human).